A 261-amino-acid polypeptide reads, in one-letter code: Ribosomal RNA small subunit methyltransferase J (261 aa).

Residues 111-112, 127-128, 163-164, and Asp181 each bind S-adenosyl-L-methionine; these read RD, ER, and SS.

It belongs to the methyltransferase superfamily. RsmJ family.

The protein resides in the cytoplasm. The catalysed reaction is guanosine(1516) in 16S rRNA + S-adenosyl-L-methionine = N(2)-methylguanosine(1516) in 16S rRNA + S-adenosyl-L-homocysteine + H(+). Functionally, specifically methylates the guanosine in position 1516 of 16S rRNA. In Shewanella sp. (strain ANA-3), this protein is Ribosomal RNA small subunit methyltransferase J.